Reading from the N-terminus, the 253-residue chain is 3-dehydroquinate dehydratase (253 aa).

3-dehydroquinate-binding positions include 46-48 and Arg-82; that span reads EWR. Catalysis depends on His-143, which acts as the Proton donor/acceptor. Lys-170 (schiff-base intermediate with substrate) is an active-site residue. 3 residues coordinate 3-dehydroquinate: Arg-213, Ser-232, and Gln-236.

The protein belongs to the type-I 3-dehydroquinase family. As to quaternary structure, homodimer.

The catalysed reaction is 3-dehydroquinate = 3-dehydroshikimate + H2O. The protein operates within metabolic intermediate biosynthesis; chorismate biosynthesis; chorismate from D-erythrose 4-phosphate and phosphoenolpyruvate: step 3/7. Its function is as follows. Involved in the third step of the chorismate pathway, which leads to the biosynthesis of aromatic amino acids. Catalyzes the cis-dehydration of 3-dehydroquinate (DHQ) and introduces the first double bond of the aromatic ring to yield 3-dehydroshikimate. The polypeptide is 3-dehydroquinate dehydratase (Syntrophotalea carbinolica (strain DSM 2380 / NBRC 103641 / GraBd1) (Pelobacter carbinolicus)).